We begin with the raw amino-acid sequence, 130 residues long: uncharacterized protein (130 aa).

This is an uncharacterized protein from Escherichia coli (strain K12).